Here is a 931-residue protein sequence, read N- to C-terminus: Envelope glycoprotein B (931 aa).

A signal peptide spans 1–71 (MSPCGYYSKW…FSMFVTAVVS (71 aa)). Residues 72–786 (VSPSSFYESL…HGFTTFLSNP (715 aa)) lie on the Virion surface side of the membrane. 5 disulfides stabilise this stretch: Cys122/Cys584, Cys139/Cys540, Cys213/Cys277, Cys369/Cys417, and Cys608/Cys645. Asn147 is a glycosylation site (N-linked (GlcNAc...) asparagine; by host). Residues 179 to 185 (AWAGSSY) form an involved in fusion and/or binding to host membrane region. N-linked (GlcNAc...) asparagine; by host glycosylation occurs at Asn257. The interval 264 to 271 (GTPGTYRT) is involved in fusion and/or binding to host membrane. Residues Asn435, Asn503, Asn620, and Asn686 are each glycosylated (N-linked (GlcNAc...) asparagine; by host). 2 hydrophobic membrane proximal region regions span residues 731 to 784 (IDKV…TFLS) and 764 to 784 (VVLGATGALLSTVHGFTTFLS). The chain crosses the membrane as a helical span at residues 787 to 807 (FGALAVGLLVLAGLVAAFFAY). At 808-931 (RYVLKLKTSP…RVRTENVTGV (124 aa)) the chain is on the intravirion side. Positions 881-884 (YMTL) match the Golgi targeting motif. Residues 920–923 (YSRV) carry the Internalization motif motif.

Belongs to the herpesviridae glycoprotein B family. Homotrimer; disulfide-linked. Binds to heparan sulfate proteoglycans. Interacts with gH/gL heterodimer. A proteolytic cleavage by host furin generates two subunits that remain linked by disulfide bonds.

The protein localises to the virion membrane. Its subcellular location is the host cell membrane. The protein resides in the host endosome membrane. It localises to the host Golgi apparatus membrane. Envelope glycoprotein that forms spikes at the surface of virion envelope. Essential for the initial attachment to heparan sulfate moieties of the host cell surface proteoglycans. Involved in fusion of viral and cellular membranes leading to virus entry into the host cell. Following initial binding to its host receptors, membrane fusion is mediated by the fusion machinery composed at least of gB and the heterodimer gH/gL. May be involved in the fusion between the virion envelope and the outer nuclear membrane during virion egress. The protein is Envelope glycoprotein B of Varicella-zoster virus (strain Oka vaccine) (HHV-3).